The primary structure comprises 196 residues: uncharacterized protein (196 aa).

The N-terminal stretch at 1-21 is a signal peptide; it reads MNGKQCFCFFLFHLFYTGLFA. Cys-22 carries N-palmitoyl cysteine lipidation. Cys-22 carries the S-diacylglycerol cysteine lipid modification.

The protein resides in the cell membrane. This is an uncharacterized protein from Treponema pallidum (strain Nichols).